Here is a 393-residue protein sequence, read N- to C-terminus: Pyrimidine monooxygenase RutA (393 aa).

Residues 79–80, Asn-145, Glu-154, 170–171, and Ser-220 contribute to the FMN site; these read IK and RY.

Belongs to the NtaA/SnaA/DszA monooxygenase family. RutA subfamily.

It catalyses the reaction uracil + FMNH2 + NADH + O2 = (Z)-3-ureidoacrylate + FMN + NAD(+) + H2O + H(+). The enzyme catalyses thymine + FMNH2 + NADH + O2 = (Z)-2-methylureidoacrylate + FMN + NAD(+) + H2O + H(+). Its function is as follows. Catalyzes the pyrimidine ring opening between N-3 and C-4 by an unusual flavin hydroperoxide-catalyzed mechanism, adding oxygen atoms in the process to yield ureidoacrylate peracid, that immediately reacts with FMN forming ureidoacrylate and FMN-N(5)-oxide. The FMN-N(5)-oxide reacts spontaneously with NADH to produce FMN. Requires the flavin reductase RutF to regenerate FMN in vivo. This is Pyrimidine monooxygenase RutA from Escherichia coli O9:H4 (strain HS).